A 141-amino-acid polypeptide reads, in one-letter code: ATP synthase epsilon chain (141 aa).

The protein belongs to the ATPase epsilon chain family. In terms of assembly, F-type ATPases have 2 components, CF(1) - the catalytic core - and CF(0) - the membrane proton channel. CF(1) has five subunits: alpha(3), beta(3), gamma(1), delta(1), epsilon(1). CF(0) has three main subunits: a, b and c.

It localises to the cell inner membrane. Produces ATP from ADP in the presence of a proton gradient across the membrane. In Burkholderia mallei (strain NCTC 10247), this protein is ATP synthase epsilon chain.